A 121-amino-acid chain; its full sequence is Small ribosomal subunit protein uS13 (121 aa).

A disordered region spans residues 93–121 (RGLPMRGQRTRTNARTRKGPRKGAAALKK).

This sequence belongs to the universal ribosomal protein uS13 family. In terms of assembly, part of the 30S ribosomal subunit. Forms a loose heterodimer with protein S19. Forms two bridges to the 50S subunit in the 70S ribosome.

Functionally, located at the top of the head of the 30S subunit, it contacts several helices of the 16S rRNA. In the 70S ribosome it contacts the 23S rRNA (bridge B1a) and protein L5 of the 50S subunit (bridge B1b), connecting the 2 subunits; these bridges are implicated in subunit movement. Contacts the tRNAs in the A and P-sites. This Paracidovorax citrulli (strain AAC00-1) (Acidovorax citrulli) protein is Small ribosomal subunit protein uS13.